The chain runs to 182 residues: Adenine phosphoribosyltransferase (182 aa).

This sequence belongs to the purine/pyrimidine phosphoribosyltransferase family. Homodimer.

It is found in the cytoplasm. It catalyses the reaction AMP + diphosphate = 5-phospho-alpha-D-ribose 1-diphosphate + adenine. It functions in the pathway purine metabolism; AMP biosynthesis via salvage pathway; AMP from adenine: step 1/1. Catalyzes a salvage reaction resulting in the formation of AMP, that is energically less costly than de novo synthesis. In Streptomyces coelicolor (strain ATCC BAA-471 / A3(2) / M145), this protein is Adenine phosphoribosyltransferase.